We begin with the raw amino-acid sequence, 346 residues long: tRNA N6-adenosine threonylcarbamoyltransferase (346 aa).

Residues histidine 111 and histidine 115 each coordinate Fe cation. Residues leucine 134–glycine 138, aspartate 167, glycine 180, and asparagine 279 each bind substrate. Aspartate 307 is a binding site for Fe cation.

Belongs to the KAE1 / TsaD family. Requires Fe(2+) as cofactor.

The protein resides in the cytoplasm. The enzyme catalyses L-threonylcarbamoyladenylate + adenosine(37) in tRNA = N(6)-L-threonylcarbamoyladenosine(37) in tRNA + AMP + H(+). Functionally, required for the formation of a threonylcarbamoyl group on adenosine at position 37 (t(6)A37) in tRNAs that read codons beginning with adenine. Is involved in the transfer of the threonylcarbamoyl moiety of threonylcarbamoyl-AMP (TC-AMP) to the N6 group of A37, together with TsaE and TsaB. TsaD likely plays a direct catalytic role in this reaction. This is tRNA N6-adenosine threonylcarbamoyltransferase from Burkholderia ambifaria (strain ATCC BAA-244 / DSM 16087 / CCUG 44356 / LMG 19182 / AMMD) (Burkholderia cepacia (strain AMMD)).